Here is a 615-residue protein sequence, read N- to C-terminus: Zinc finger protein 181 (615 aa).

The 73-residue stretch at valine 48–proline 120 folds into the KRAB domain. Glycyl lysine isopeptide (Lys-Gly) (interchain with G-Cter in SUMO2) cross-links involve residues lysine 153 and lysine 170. 11 consecutive C2H2-type zinc fingers follow at residues tyrosine 281–histidine 303, tyrosine 309–histidine 331, tyrosine 337–histidine 359, tyrosine 365–histidine 387, tyrosine 393–histidine 415, tyrosine 421–histidine 443, tyrosine 449–histidine 471, phenylalanine 477–histidine 499, tyrosine 505–histidine 527, tyrosine 533–histidine 555, and tyrosine 561–histidine 583.

It belongs to the krueppel C2H2-type zinc-finger protein family.

The protein resides in the nucleus. Its function is as follows. May be involved in transcriptional regulation. The protein is Zinc finger protein 181 (ZNF181) of Pongo abelii (Sumatran orangutan).